The sequence spans 481 residues: Phosphoglucosamine mutase (481 aa).

The active-site Phosphoserine intermediate is the S129. Mg(2+) contacts are provided by S129, D271, D273, and D275. S129 is modified (phosphoserine).

It belongs to the phosphohexose mutase family. It depends on Mg(2+) as a cofactor. In terms of processing, activated by phosphorylation.

The enzyme catalyses alpha-D-glucosamine 1-phosphate = D-glucosamine 6-phosphate. Its function is as follows. Catalyzes the conversion of glucosamine-6-phosphate to glucosamine-1-phosphate. This Picosynechococcus sp. (strain ATCC 27264 / PCC 7002 / PR-6) (Agmenellum quadruplicatum) protein is Phosphoglucosamine mutase.